Here is an 88-residue protein sequence, read N- to C-terminus: Small ribosomal subunit protein bS20 (88 aa).

Residues 1–25 (MANSAQARKRARQATKARAHNASLR) form a disordered region. Residues 7–19 (ARKRARQATKARA) are compositionally biased toward basic residues.

This sequence belongs to the bacterial ribosomal protein bS20 family.

In terms of biological role, binds directly to 16S ribosomal RNA. This is Small ribosomal subunit protein bS20 from Azoarcus sp. (strain BH72).